The primary structure comprises 384 residues: PqqA peptide cyclase (384 aa).

The 216-residue stretch at 5 to 220 (VGLPLWLLAE…TNEYREKLKA (216 aa)) folds into the Radical SAM core domain. Residues cysteine 19, cysteine 23, and cysteine 26 each coordinate [4Fe-4S] cluster.

It belongs to the radical SAM superfamily. PqqE family. Interacts with PqqD. The interaction is necessary for activity of PqqE. Requires [4Fe-4S] cluster as cofactor.

The enzyme catalyses [PQQ precursor protein] + S-adenosyl-L-methionine = E-Y cross-linked-[PQQ precursor protein] + 5'-deoxyadenosine + L-methionine + H(+). It participates in cofactor biosynthesis; pyrroloquinoline quinone biosynthesis. Functionally, catalyzes the cross-linking of a glutamate residue and a tyrosine residue in the PqqA protein as part of the biosynthesis of pyrroloquinoline quinone (PQQ). The sequence is that of PqqA peptide cyclase from Acinetobacter baumannii (strain SDF).